We begin with the raw amino-acid sequence, 541 residues long: Membrane protein insertase YidC (541 aa).

A run of 5 helical transmembrane segments spans residues 6–26 (NILLIGLLFVSFLLWQQWQAD), 349–369 (FVGNWGVAIILITLTVRGLLF), 420–440 (GGCLPILLQMPIFIALYWVLL), 457–477 (LSVQDPYYILPLLMGASMFVM), and 500–520 (MIFTVFFLWFPSGLVLYWLVG).

The protein belongs to the OXA1/ALB3/YidC family. Type 1 subfamily. In terms of assembly, interacts with the Sec translocase complex via SecD. Specifically interacts with transmembrane segments of nascent integral membrane proteins during membrane integration.

Its subcellular location is the cell inner membrane. Its function is as follows. Required for the insertion and/or proper folding and/or complex formation of integral membrane proteins into the membrane. Involved in integration of membrane proteins that insert both dependently and independently of the Sec translocase complex, as well as at least some lipoproteins. Aids folding of multispanning membrane proteins. This chain is Membrane protein insertase YidC, found in Shewanella sp. (strain ANA-3).